We begin with the raw amino-acid sequence, 845 residues long: Protein P (845 aa).

The terminal protein domain (TP) stretch occupies residues Met1–Gln179. A spacer region spans residues Glu180–Leu348. Disordered regions lie at residues Ser186–Gly205, Gln222–Ile245, and Tyr288–Ser318. The span at Ser289–Gly301 shows a compositional bias: polar residues. Positions Glu349–Gln692 are polymerase/reverse transcriptase domain (RT). A Reverse transcriptase domain is found at Glu359 to Ile602. Asp431, Asp553, and Asp554 together coordinate Mg(2+).

Belongs to the hepadnaviridae P protein family.

The enzyme catalyses DNA(n) + a 2'-deoxyribonucleoside 5'-triphosphate = DNA(n+1) + diphosphate. It carries out the reaction Endonucleolytic cleavage to 5'-phosphomonoester.. With respect to regulation, activated by host HSP70 and HSP40 in vitro to be able to bind the epsilon loop of the pgRNA. Because deletion of the RNase H region renders the protein partly chaperone-independent, the chaperones may be needed indirectly to relieve occlusion of the RNA-binding site by this domain. Inhibited by several reverse-transcriptase inhibitors: Lamivudine, Adefovir and Entecavir. Multifunctional enzyme that converts the viral RNA genome into dsDNA in viral cytoplasmic capsids. This enzyme displays a DNA polymerase activity that can copy either DNA or RNA templates, and a ribonuclease H (RNase H) activity that cleaves the RNA strand of RNA-DNA heteroduplexes in a partially processive 3'- to 5'-endonucleasic mode. Neo-synthesized pregenomic RNA (pgRNA) are encapsidated together with the P protein, and reverse-transcribed inside the nucleocapsid. Initiation of reverse-transcription occurs first by binding the epsilon loop on the pgRNA genome, and is initiated by protein priming, thereby the 5'-end of (-)DNA is covalently linked to P protein. Partial (+)DNA is synthesized from the (-)DNA template and generates the relaxed circular DNA (RC-DNA) genome. After budding and infection, the RC-DNA migrates in the nucleus, and is converted into a plasmid-like covalently closed circular DNA (cccDNA). The activity of P protein does not seem to be necessary for cccDNA generation, and is presumably released from (+)DNA by host nuclear DNA repair machinery. The polypeptide is Protein P (Hepatitis B virus genotype A3 (isolate Cameroon/CMR711/1994) (HBV-A)).